Consider the following 36-residue polypeptide: Amanexitide proprotein 1 (36 aa).

A propeptide spanning residues 1–10 (MSDINTARLP) is cleaved from the precursor. Residues 11 to 19 (VFSLPVFFP) constitute a cross-link (cyclopeptide (Val-Pro)). Positions 20–36 (FVSDDIQAVLTRGESLC) are excised as a propeptide.

Belongs to the MSDIN fungal toxin family. Post-translationally, processed by the macrocyclase-peptidase enzyme POPB to yield a toxic cyclic nonapeptide. POPB first removes 10 residues from the N-terminus. Conformational trapping of the remaining peptide forces the enzyme to release this intermediate rather than proceed to macrocyclization. The enzyme rebinds the remaining peptide in a different conformation and catalyzes macrocyclization of the N-terminal 9 residues. In terms of tissue distribution, expressed in basidiocarps.

In terms of biological role, cyclic nonapeptide that belongs to the MSDIN-like toxin family responsible for a large number of food poisoning cases and deaths. This Amanita exitialis (Guangzhou destroying angel) protein is Amanexitide proprotein 1.